The following is a 393-amino-acid chain: NAD(P)H-quinone oxidoreductase subunit H, chloroplastic (393 aa).

The protein belongs to the complex I 49 kDa subunit family. NDH is composed of at least 16 different subunits, 5 of which are encoded in the nucleus.

It is found in the plastid. Its subcellular location is the chloroplast thylakoid membrane. The catalysed reaction is a plastoquinone + NADH + (n+1) H(+)(in) = a plastoquinol + NAD(+) + n H(+)(out). It catalyses the reaction a plastoquinone + NADPH + (n+1) H(+)(in) = a plastoquinol + NADP(+) + n H(+)(out). NDH shuttles electrons from NAD(P)H:plastoquinone, via FMN and iron-sulfur (Fe-S) centers, to quinones in the photosynthetic chain and possibly in a chloroplast respiratory chain. The immediate electron acceptor for the enzyme in this species is believed to be plastoquinone. Couples the redox reaction to proton translocation, and thus conserves the redox energy in a proton gradient. The polypeptide is NAD(P)H-quinone oxidoreductase subunit H, chloroplastic (Cryptomeria japonica (Japanese cedar)).